A 341-amino-acid chain; its full sequence is Inactive caspase-12 (341 aa).

The CARD domain maps to 1-92; sequence MADEKPSNGV…QLSSDISSDG (92 aa). A phosphoserine mark is found at Ser85 and Ser90. Active-site residues include His172 and Cys220.

It belongs to the peptidase C14A family. Widely expressed, with highest levels in lung.

In terms of biological role, may function as a negative regulator of inflammatory responses and innate immunity. May reduce cytokine release in response to bacterial lipopolysaccharide during infection. Reduces activation of NF-kappa-B in response to TNF. May lack protease activity. The protein is Inactive caspase-12 (CASP12) of Homo sapiens (Human).